A 301-amino-acid polypeptide reads, in one-letter code: 33 kDa chaperonin (301 aa).

Intrachain disulfides connect Cys-239–Cys-241 and Cys-272–Cys-275.

This sequence belongs to the HSP33 family. In terms of processing, under oxidizing conditions two disulfide bonds are formed involving the reactive cysteines. Under reducing conditions zinc is bound to the reactive cysteines and the protein is inactive.

The protein resides in the cytoplasm. In terms of biological role, redox regulated molecular chaperone. Protects both thermally unfolding and oxidatively damaged proteins from irreversible aggregation. Plays an important role in the bacterial defense system toward oxidative stress. The polypeptide is 33 kDa chaperonin (Nostoc sp. (strain PCC 7120 / SAG 25.82 / UTEX 2576)).